Consider the following 525-residue polypeptide: FNIP repeat-containing protein DDB_G0274617 (525 aa).

Residues 65–107 (YQHEIKKEMLPSSIISIIFYNIKNILSSDSIPDTVKFLGFNGY) form an FNIP repeat.

In Dictyostelium discoideum (Social amoeba), this protein is FNIP repeat-containing protein DDB_G0274617.